Consider the following 180-residue polypeptide: Calcineurin subunit B type 1 (180 aa).

Glycine 2 is lipidated: N-myristoyl glycine. EF-hand domains follow at residues 25-60 (AELKKLYRRFQMLDKDGSGTLTTDEFLSIPDLALNP), 62-92 (LERVIQIFDQNKDNEIEFFEFVGTLATLSHK), 94-129 (TKEDKLKFLFQIYDIDCDGFISNGELFQVLKMMVGT), and 135-170 (QLQQIVDKTIIEGDYDKDGKISFDEFIHMIGNQEGI). Ca(2+) is bound by residues aspartate 38, aspartate 40, serine 42, threonine 44, glutamate 49, aspartate 70, asparagine 72, aspartate 74, glutamate 76, glutamate 81, aspartate 107, aspartate 109, aspartate 111, and glutamate 118. The interval 138-143 (QIVDKT) is canA/calcineurin A binding. The Ca(2+) site is built by aspartate 148, aspartate 150, aspartate 152, lysine 154, and glutamate 159.

The protein belongs to the calcineurin regulatory subunit family. In terms of assembly, forms a complex composed of a calmodulin-dependent catalytic subunit canA (also known as calcineurin A) and a regulatory Ca(2+)-binding subunit cnbA (also known as calcineurin B).

Its function is as follows. Regulatory subunit of calcineurin, a calcium-dependent, calmodulin stimulated protein phosphatase. Confers calcium sensitivity. Important for stalk formation. This Dictyostelium discoideum (Social amoeba) protein is Calcineurin subunit B type 1 (cnbA).